Reading from the N-terminus, the 216-residue chain is uncharacterized protein (216 aa).

This sequence belongs to the channel forming colicin family.

This is an uncharacterized protein from Escherichia coli.